Reading from the N-terminus, the 129-residue chain is Glycine cleavage system H protein (129 aa).

In terms of domain architecture, Lipoyl-binding spans 24–106; sequence LFKIGVSEFA…IGDGWLLIIK (83 aa). An N6-lipoyllysine modification is found at K65.

It belongs to the GcvH family. In terms of assembly, the glycine cleavage system is composed of four proteins: P, T, L and H. Requires (R)-lipoate as cofactor.

In terms of biological role, the glycine cleavage system catalyzes the degradation of glycine. The H protein shuttles the methylamine group of glycine from the P protein to the T protein. The protein is Glycine cleavage system H protein of Prochlorococcus marinus subsp. pastoris (strain CCMP1986 / NIES-2087 / MED4).